The chain runs to 263 residues: Nuclear egress protein 2 (263 aa).

Residues 1–235 (MASGKKLIDQ…STSLTGRCPS (235 aa)) are Perinuclear space-facing. Residues 236 to 256 (WGAACALLLLSLAVGLMAILA) traverse the membrane as a helical segment. The Nuclear segment spans residues 257-263 (AKLMQWP).

The protein belongs to the herpesviridae NEC2 protein family. In terms of assembly, forms a heterohexameric complex with NEC1. Post-translationally, phosphorylated.

The protein resides in the host nucleus inner membrane. Functionally, plays an essential role in virion nuclear egress, the first step of virion release from infected cell. Within the host nucleus, NEC1 interacts with the newly formed capsid through the vertexes and directs it to the inner nuclear membrane by associating with NEC2. Induces the budding of the capsid at the inner nuclear membrane as well as its envelopment into the perinuclear space. There, the NEC1/NEC2 complex promotes the fusion of the enveloped capsid with the outer nuclear membrane and the subsequent release of the viral capsid into the cytoplasm where it will reach the secondary budding sites in the host Golgi or trans-Golgi network. The sequence is that of Nuclear egress protein 2 from Connochaetes taurinus (Blue wildebeest).